The following is a 240-amino-acid chain: MFLKVRAEKRLGNFRLNVDFEMGRDYCVLLGPTGAGKSVFLELIAGIVKPDRGEVRLNGADITPLPPERRGIGFVPQDYALFPHLSVYRNIAYGLRNVERVERDRRVREMAEKLGIAHLLDRKPARLSGGERQRVALARALVIQPRLLLLDEPLSAVDLKTKGVLMEELRFVQREFDVPILHVTHDLIEAAMLADEVAVMLNGRIVEKGKLKELFSAKNGEVAEFLSARNLLLKVSKILD.

Residues 2–227 (FLKVRAEKRL…KNGEVAEFLS (226 aa)) enclose the ABC transporter domain. 31–38 (GPTGAGKS) is an ATP binding site.

It belongs to the ABC transporter superfamily. Sulfate/tungstate importer (TC 3.A.1.6) family. As to quaternary structure, the complex is composed of two ATP-binding proteins (WtpC), two transmembrane proteins (WtpB) and a solute-binding protein (WtpA).

It is found in the cell membrane. The catalysed reaction is tungstate(in) + ATP + H2O = tungstate(out) + ADP + phosphate + H(+). Part of the ABC transporter complex WtpABC involved in molybdate/tungstate import. Responsible for energy coupling to the transport system. The sequence is that of Molybdate/tungstate import ATP-binding protein WtpC (wtpC) from Archaeoglobus fulgidus (strain ATCC 49558 / DSM 4304 / JCM 9628 / NBRC 100126 / VC-16).